Reading from the N-terminus, the 358-residue chain is Molybdenum import ATP-binding protein ModC (358 aa).

The 233-residue stretch at 2 to 234 (NDDISASFFS…PDLPLAHLEE (233 aa)) folds into the ABC transporter domain. ATP is bound at residue 34 to 41 (GRSGSGKT). A Mop domain is found at 293-358 (LSSISNCIPV…AQVKSVALID (66 aa)).

It belongs to the ABC transporter superfamily. Molybdate importer (TC 3.A.1.8) family. As to quaternary structure, the complex is composed of two ATP-binding proteins (ModC), two transmembrane proteins (ModB) and a solute-binding protein (ModA).

The protein localises to the cell inner membrane. The catalysed reaction is molybdate(out) + ATP + H2O = molybdate(in) + ADP + phosphate + H(+). Its function is as follows. Part of the ABC transporter complex ModABC involved in molybdenum import. Responsible for energy coupling to the transport system. The chain is Molybdenum import ATP-binding protein ModC from Hahella chejuensis (strain KCTC 2396).